The chain runs to 113 residues: Hydrogenase maturation factor HypA (113 aa).

Histidine 2 lines the Ni(2+) pocket. The Zn(2+) site is built by cysteine 73, cysteine 76, cysteine 89, and cysteine 92.

It belongs to the HypA/HybF family.

Involved in the maturation of [NiFe] hydrogenases. Required for nickel insertion into the metal center of the hydrogenase. In Rhodopseudomonas palustris (strain BisA53), this protein is Hydrogenase maturation factor HypA.